The chain runs to 483 residues: Centrosomal protein cep57l1 (483 aa).

The stretch at 94-228 forms a coiled coil; sequence EHKKVLESEK…AQVQTSLEVN (135 aa). 3 disordered regions span residues 237–261, 303–325, and 416–460; these read AQNS…SKEP, PQVS…GGSR, and KEQP…SKAS. Positions 243 to 252 are enriched in basic residues; that stretch reads RKVKKKKQSK. Residues 375-418 are a coiled coil; it reads EDLERELDYVVKQMEIKSDQIMKLKRHQLNVNKLKKTAKLLKEQ. The span at 420–435 shows a compositional bias: polar residues; sequence RPTSVTKLAADKQNTG.

Belongs to the translokin family. As to quaternary structure, interacts with clip1, mis12, ndc80 and zwint. Interacts with gamma-tubulin.

It localises to the cytoplasm. The protein resides in the cytoskeleton. The protein localises to the microtubule organizing center. Its subcellular location is the centrosome. It is found in the chromosome. It localises to the centromere. The protein resides in the kinetochore. The protein localises to the spindle. Its function is as follows. Required for spindle microtubule attachment to both kinetochores and centrosomes. Also functions to tether minus-ends of spindle microtubules to centrosomes. May act by forming ring-like structures around microtubules, or by serving as a cross-linker or scaffold at the attachment site. This is Centrosomal protein cep57l1 (cep57l1) from Xenopus tropicalis (Western clawed frog).